The primary structure comprises 389 residues: Aspartic protease pepA (389 aa).

The first 20 residues, 1-20 (MVLINQLGAVLAVCATLTVA), serve as a signal peptide directing secretion. A propeptide spans 21 to 67 (APTKGKARFNVPQVAIPKKMVHHPAVSYARALHKFGMKVPKTVQDAA) (activation peptide). The Peptidase A1 domain occupies 82-386 (YVTQVTVGEG…DTQGPRIGFA (305 aa)). Asp98 is a catalytic residue. Asn257 carries N-linked (GlcNAc...) asparagine glycosylation. Asp279 is a catalytic residue. A disulfide bond links Cys315 and Cys348.

It belongs to the peptidase A1 family. As to quaternary structure, monomer.

The protein localises to the secreted. Secreted aspartic endopeptidase that allows assimilation of proteinaceous substrates. The scissile peptide bond is attacked by a nucleophilic water molecule activated by two aspartic residues in the active site. Shows a broad primary substrate specificity. Favors hydrophobic residues at the P1 and P1' positions. This Arthroderma otae (strain ATCC MYA-4605 / CBS 113480) (Microsporum canis) protein is Aspartic protease pepA.